Reading from the N-terminus, the 237-residue chain is Ribitol-5-phosphate cytidylyltransferase (237 aa).

CTP contacts are provided by residues 7 to 10 (LAGG) and 80 to 86 (GEDRNET).

Belongs to the IspD/TarI cytidylyltransferase family. TarI subfamily.

The enzyme catalyses D-ribitol 5-phosphate + CTP + H(+) = CDP-L-ribitol + diphosphate. It functions in the pathway cell wall biogenesis; poly(ribitol phosphate) teichoic acid biosynthesis. Its function is as follows. Catalyzes the transfer of the cytidylyl group of CTP to D-ribitol 5-phosphate. This Listeria innocua serovar 6a (strain ATCC BAA-680 / CLIP 11262) protein is Ribitol-5-phosphate cytidylyltransferase.